The sequence spans 204 residues: UPF0637 protein SaurJH9_1166 (204 aa).

It belongs to the UPF0637 family.

The chain is UPF0637 protein SaurJH9_1166 from Staphylococcus aureus (strain JH9).